A 399-amino-acid polypeptide reads, in one-letter code: Enolase (399 aa).

Q152 provides a ligand contact to (2R)-2-phosphoglycerate. The Proton donor role is filled by E194. Mg(2+)-binding residues include D230, E273, and D301. 4 residues coordinate (2R)-2-phosphoglycerate: K326, R355, S356, and K377. K326 acts as the Proton acceptor in catalysis.

This sequence belongs to the enolase family. The cofactor is Mg(2+).

It is found in the cytoplasm. The protein resides in the secreted. The protein localises to the cell surface. The enzyme catalyses (2R)-2-phosphoglycerate = phosphoenolpyruvate + H2O. It functions in the pathway carbohydrate degradation; glycolysis; pyruvate from D-glyceraldehyde 3-phosphate: step 4/5. Functionally, catalyzes the reversible conversion of 2-phosphoglycerate (2-PG) into phosphoenolpyruvate (PEP). It is essential for the degradation of carbohydrates via glycolysis. This Methanocorpusculum labreanum (strain ATCC 43576 / DSM 4855 / Z) protein is Enolase.